A 300-amino-acid polypeptide reads, in one-letter code: uncharacterized protein (300 aa).

The Charge relay system role is filled by serine 49. Catalysis depends on tyrosine 137, which acts as the Proton donor. The active-site Schiff-base intermediate with substrate is the lysine 165.

Belongs to the DapA family. Homotetramer.

The protein resides in the cytoplasm. Its function is as follows. Upon expression in E.coli complements a dapA deletion mutation, but this may not be its physiological function. This is an uncharacterized protein from Rhizobium meliloti (Ensifer meliloti).